A 686-amino-acid polypeptide reads, in one-letter code: MAM domain-containing protein 2 (686 aa).

The signal sequence occupies residues 1–18 (MLLRGVLLALQALQLAGA). 4 MAM domains span residues 24–169 (GSCA…YCIE), 168–329 (IECD…HCQN), 340–498 (ASCN…SCSS), and 507–666 (GECT…PCGE). N-linked (GlcNAc...) asparagine glycosylation is found at Asn134 and Asn329. 2 disordered regions span residues 521–543 (EKRN…TGPK) and 665–686 (GEME…EIEY). N-linked (GlcNAc...) asparagine glycosylation occurs at Asn524.

In terms of processing, O-glycosylated.

The protein resides in the secreted. The protein localises to the extracellular space. It is found in the extracellular matrix. This chain is MAM domain-containing protein 2 (MAMDC2), found in Homo sapiens (Human).